The following is an 86-amino-acid chain: Cell division protein ZapA (86 aa).

The protein belongs to the ZapA family. Type 2 subfamily. In terms of assembly, homodimer. Interacts with FtsZ.

Its subcellular location is the cytoplasm. Its function is as follows. Activator of cell division through the inhibition of FtsZ GTPase activity, therefore promoting FtsZ assembly into bundles of protofilaments necessary for the formation of the division Z ring. It is recruited early at mid-cell but it is not essential for cell division. The chain is Cell division protein ZapA from Oceanobacillus iheyensis (strain DSM 14371 / CIP 107618 / JCM 11309 / KCTC 3954 / HTE831).